The following is a 46-amino-acid chain: Large ribosomal subunit protein bL34c (46 aa).

The tract at residues 1-46 (MSKRTLEGSHRKKVRKSGFLSRSQSPTGRRILKARRKKGRKMLVKY) is disordered. Residues 30–46 (RILKARRKKGRKMLVKY) are compositionally biased toward basic residues.

Belongs to the bacterial ribosomal protein bL34 family.

The protein resides in the plastid. It localises to the cyanelle. This chain is Large ribosomal subunit protein bL34c (rpl34), found in Cyanophora paradoxa.